Reading from the N-terminus, the 152-residue chain is Large ribosomal subunit protein bL9 (152 aa).

Belongs to the bacterial ribosomal protein bL9 family.

Functionally, binds to the 23S rRNA. This is Large ribosomal subunit protein bL9 from Streptococcus thermophilus (strain CNRZ 1066).